The sequence spans 399 residues: Type II secretion system protein L (399 aa).

The Cytoplasmic portion of the chain corresponds to 1–247 (MSKAENTSGK…VKPWKQALLP (247 aa)). Residues 248-264 (WRNVLIALSAWLLLVLG) form a helical membrane-spanning segment. At 265-399 (ESVWTHYQWY…EGQLTLRSQP (135 aa)) the chain is on the periplasmic side.

Belongs to the GSP L family. As to quaternary structure, type II secretion system is composed of four main components: the outer membrane complex, the inner membrane complex, the cytoplasmic secretion ATPase and the periplasm-spanning pseudopilus. Forms homodimers. Interacts with OutM/GspM. Interacts with OutE/GspE and OutF/GspF.

The protein resides in the cell inner membrane. Inner membrane component of the type II secretion system required for the energy-dependent secretion of extracellular factors such as proteases and toxins from the periplasm. Plays a role in the complex assembly and recruits OutM resulting in a stable complex in the inner membrane. Provides thus a link between the energy-providing OutE protein in the cytoplasm and the rest of the T2SS machinery. The sequence is that of Type II secretion system protein L (outL) from Dickeya chrysanthemi (Pectobacterium chrysanthemi).